The primary structure comprises 262 residues: MEKVKIGIIGGSGLYSPDFLTNPKEEKIYTPYGPPSSHVVIGEIAGRKVAFIPRHGKRHEIPPHKVNYRANIYALKELGVERLISVSAVGSLREDYKPGDFVCTDQFIDMTKGRVYTFYDGPVVAHVSMADPFCPELRELCIRSARKLGITMHEKGTYICIEGPRFSTRAESRLWRQFGADIIGMTLVPEVNLAREARMCFLNIAMVTDYDVWAEKPVTAHEVARVMAENTEKVKRLLADLIPSIPEERKCQCARALDEALI.

Phosphate is bound by residues S12, 54–55 (RH), and 87–88 (SA). M185 is a binding site for substrate. A phosphate-binding site is contributed by T186. 209-211 (DYD) is a binding site for substrate.

The protein belongs to the PNP/MTAP phosphorylase family. MTAP subfamily. In terms of assembly, homohexamer. Dimer of a homotrimer.

The enzyme catalyses S-methyl-5'-thioadenosine + phosphate = 5-(methylsulfanyl)-alpha-D-ribose 1-phosphate + adenine. The protein operates within amino-acid biosynthesis; L-methionine biosynthesis via salvage pathway; S-methyl-5-thio-alpha-D-ribose 1-phosphate from S-methyl-5'-thioadenosine (phosphorylase route): step 1/1. Functionally, catalyzes the reversible phosphorylation of S-methyl-5'-thioadenosine (MTA) to adenine and 5-methylthioribose-1-phosphate. Involved in the breakdown of MTA, a major by-product of polyamine biosynthesis. Responsible for the first step in the methionine salvage pathway after MTA has been generated from S-adenosylmethionine. Has broad substrate specificity with 6-aminopurine nucleosides as preferred substrates. The protein is S-methyl-5'-thioadenosine phosphorylase of Thermofilum pendens (strain DSM 2475 / Hrk 5).